Here is a 201-residue protein sequence, read N- to C-terminus: Lipopolysaccharide core heptose(II)-phosphate phosphatase (201 aa).

Positions 1 to 33 (MLAFTLRFIKNKRYFAILAGALVIIAGLASQHA) are cleaved as a signal peptide.

The protein belongs to the phosphoglycerate mutase family. Ais subfamily.

The protein localises to the periplasm. It functions in the pathway bacterial outer membrane biogenesis; lipopolysaccharide metabolism. Functionally, catalyzes the dephosphorylation of heptose(II) of the outer membrane lipopolysaccharide core. The chain is Lipopolysaccharide core heptose(II)-phosphate phosphatase from Salmonella typhi.